A 669-amino-acid chain; its full sequence is Epithelial sodium channel subunit gamma (669 aa).

Residues 1–67 are Cytoplasmic-facing; that stretch reads MAPPYHGDTR…VVSRGRLRKF (67 aa). The helical transmembrane segment at 68–88 threads the bilayer; that stretch reads IWILLTLSAVGLILWQCAELI. At 89 to 551 the chain is on the extracellular side; it reads MSYYTASVSV…VILLSNFGGQ (463 aa). 8 disulfide bridges follow: C113–C300, C223–C231, C277–C284, C389–C474, C411–C470, C415–C466, C424–C451, and C426–C440. The chain crosses the membrane as a helical span at residues 552-572; the sequence is LGLWMSCSMVCVIEIIEVFFI. Topologically, residues 573-669 are cytoplasmic; the sequence is DSFSIVMRRR…LPDTLEGRSH (97 aa). The disordered stretch occupies residues 592 to 619; the sequence is DRKAPRPQEPPQVNAPAKEGHDNPVCTD.

Belongs to the amiloride-sensitive sodium channel (TC 1.A.6) family. SCNN1G subfamily. In terms of assembly, component of the heterotrimeric epithelial sodium channel (ENaC) composed of an alpha/SCNN1A, a beta/SCNN1B and a gamma/SCNN1G subunit.

It is found in the apical cell membrane. The catalysed reaction is Na(+)(in) = Na(+)(out). With respect to regulation, originally identified and characterized by its inhibition by the diuretic drug amiloride. Its function is as follows. This is one of the three pore-forming subunits of the heterotrimeric epithelial sodium channel (ENaC), a critical regulator of sodium balance and fluid homeostasis. ENaC operates in epithelial tissues, where it mediates the electrodiffusion of sodium ions from extracellular fluid through the apical membrane of cells, with water following osmotically. This Pelodiscus sinensis (Chinese softshell turtle) protein is Epithelial sodium channel subunit gamma.